A 730-amino-acid chain; its full sequence is Protein groucho (730 aa).

The interval 144-411 (QVPGGPPQPM…GKPAYSFHMN (268 aa)) is disordered. The span at 198–233 (AEERLRNSVSPADREKYRTRSPLDIENDSKRRKDEK) shows a compositional bias: basic and acidic residues. 3 positions are modified to phosphoserine: serine 205, serine 207, and serine 218. Residues 206-267 (VSPADREKYR…SPRPNGEHVS (62 aa)) form a CCN domain region. The Nuclear localization signal signature appears at 227-230 (KRRK). The residue at position 242 (serine 242) is a Phosphoserine; by CK2. Over residues 254-283 (MESHSPRPNGEHVSMEVRDRESLNGERLEK) the composition is skewed to basic and acidic residues. At serine 258 the chain carries Phosphoserine; by CDC2. The segment at 262–425 (NGEHVSMEVR…LQPVPFPPDA (164 aa)) is binding to basic helix-loop-helix domain. At serine 267 the chain carries Phosphoserine. 3 stretches are compositionally biased toward low complexity: residues 296 to 308 (SRSG…STPS), 322 to 345 (AKAR…QMMP), and 353 to 362 (YPGAPYQRPA). 2 positions are modified to phosphothreonine: threonine 326 and threonine 328. The span at 366 to 382 (QRPPSDPAYGRPPPMPY) shows a compositional bias: pro residues. 7 WD repeats span residues 442–480 (SHGE…NKNP), 488–527 (QRDN…PRIK), 532–571 (SAAP…LVRQ), 574–613 (GHTD…QLQQ), 615–654 (DFSS…KYQL), 656–695 (LHES…SIFQ), and 697–730 (KETS…EVIY).

It belongs to the WD repeat Groucho/TLE family. As to quaternary structure, forms a complex with the hairy/Enhancer of split/deadpan family of basic helix-loop-helix proteins in order to repress transcription. Its activity in regulating transcription depends on other proteins as it lacks a DNA-binding motif. Interacts with hairy/hry (via WRPW motif). Ubiquitinated by XIAP/BIRC4. Ubiquitinated by hyd in response to Wnt signaling, leading to degradation by the proteasome.

Its subcellular location is the nucleus. Functionally, transcriptional corepressor that regulates transcription when recruited to specific target DNA by hairy-related bHLH proteins. Maternally required for neurogenesis; in the segregation of the neuroectoderm. Directly or indirectly interacts with Notch and Delta. The chain is Protein groucho (gro) from Drosophila melanogaster (Fruit fly).